We begin with the raw amino-acid sequence, 385 residues long: Putative F-box protein At1g49610 (385 aa).

The F-box domain maps to 25–73; that stretch reads VDSISSLPDVILQENLSLIPTKFAIRTSVLSKRWRHVWSETPSLDFDDC.

The chain is Putative F-box protein At1g49610 from Arabidopsis thaliana (Mouse-ear cress).